The primary structure comprises 433 residues: Serine hydroxymethyltransferase (433 aa).

Position 121 to 123 (121 to 123) interacts with (6S)-5,6,7,8-tetrahydrofolate; sequence AHV. At Lys227 the chain carries N6-(pyridoxal phosphate)lysine. A (6S)-5,6,7,8-tetrahydrofolate-binding site is contributed by Glu243.

It belongs to the SHMT family. In terms of assembly, homodimer. Pyridoxal 5'-phosphate is required as a cofactor.

Its subcellular location is the cytoplasm. It participates in amino-acid biosynthesis; glycine biosynthesis; glycine from L-serine: step 1/1. Functionally, catalyzes the reversible interconversion of serine and glycine with a modified folate serving as the one-carbon carrier. Also exhibits a pteridine-independent aldolase activity toward beta-hydroxyamino acids, producing glycine and aldehydes, via a retro-aldol mechanism. In Saccharolobus islandicus (strain Y.N.15.51 / Yellowstone #2) (Sulfolobus islandicus), this protein is Serine hydroxymethyltransferase.